The primary structure comprises 335 residues: MDTRPLIGITMGDPASIGPEIAAKALANPEIYALCRPLLIGDSRVMARAFETTGVKLNLNPVATPAEGKYAHGTVDLIDLPVVDMGTLQWGQVQAQAGAAAFAYIKRSIELALEGAVDAVTTGPINKEALKAARIDFIGHTEIFGELTGSHDPLTMFETKGLRIFFLTRHVSLAQACRMITRDRVLDYIRRCTAALEQLGLVRPKLAVAGLNPHCGEHGLFGDEEVREIEPAVQQAQAEGYNVSGPHPADSVFWHAAQGRFDAVLSLYHDQGHIAAKMYDFERTVSITAGLPFLRSSVDHGTAFDIAGTGRASAVSLEEAIRVGAKYAAAFRRTR.

Histidine 140 and threonine 141 together coordinate substrate. A divalent metal cation-binding residues include histidine 170, histidine 214, and histidine 269. Residues lysine 277 and arginine 295 each contribute to the substrate site.

This sequence belongs to the PdxA family. PdxA2 subfamily. Homodimer. A divalent metal cation serves as cofactor.

The enzyme catalyses 4-O-phospho-D-threonate + NAD(+) = dihydroxyacetone phosphate + CO2 + NADH. Functionally, catalyzes the NAD-dependent oxidation and subsequent decarboxylation of D-threonate 4-phosphate to produce dihydroxyacetone phosphate (DHAP). This chain is Putative D-threonate 4-phosphate dehydrogenase, found in Symbiobacterium thermophilum (strain DSM 24528 / JCM 14929 / IAM 14863 / T).